Consider the following 244-residue polypeptide: Tubulin-folding cofactor B (244 aa).

The residue at position 1 (methionine 1) is an N-acetylmethionine. Position 65 is a phosphoserine; by PAK1 (serine 65). Position 98 is a phosphotyrosine (tyrosine 98). Position 110 is a phosphoserine (serine 110). Serine 128 carries the phosphoserine; by PAK1 modification. The CAP-Gly domain occupies 183 to 225 (GLTDFKPGYWVGVRYDEPLGKNDGSVNGKRYFECQAKYGAFVK). N6-acetyllysine is present on lysine 219.

This sequence belongs to the TBCB family. In terms of assembly, supercomplex made of cofactors A to E. Cofactors A and D function by capturing and stabilizing tubulin in a quasi-native conformation. Cofactor E binds to the cofactor D-tubulin complex; interaction with cofactor C then causes the release of tubulin polypeptides that are committed to the native state. Cofactors B and E can form a heterodimer which binds to alpha-tubulin and enhances their ability to dissociate tubulin heterodimers. Interacts with GAN. Interacts with DCTN1. In terms of processing, phosphorylation by PAK1 is required for normal function. Ubiquitinated in the presence of GAN which targets it for degradation by the proteasome. In terms of tissue distribution, widely expressed with highest levels in brain. Broadly distributed throughout the neonate brain but restricted mainly to ependymary cells in the adult brain where it is concentrated in the cilia.

It is found in the cytoplasm. The protein resides in the cytoskeleton. Functionally, binds to alpha-tubulin folding intermediates after their interaction with cytosolic chaperonin in the pathway leading from newly synthesized tubulin to properly folded heterodimer. Involved in regulation of tubulin heterodimer dissociation. May function as a negative regulator of axonal growth. In Mus musculus (Mouse), this protein is Tubulin-folding cofactor B (Tbcb).